An 891-amino-acid chain; its full sequence is Aconitate hydratase A (891 aa).

[4Fe-4S] cluster contacts are provided by Cys-435, Cys-501, and Cys-504.

The protein belongs to the aconitase/IPM isomerase family. As to quaternary structure, monomer. It depends on [4Fe-4S] cluster as a cofactor.

The catalysed reaction is citrate = D-threo-isocitrate. It catalyses the reaction (2S,3R)-3-hydroxybutane-1,2,3-tricarboxylate = 2-methyl-cis-aconitate + H2O. Its pathway is carbohydrate metabolism; tricarboxylic acid cycle; isocitrate from oxaloacetate: step 2/2. It functions in the pathway organic acid metabolism; propanoate degradation. In terms of biological role, involved in the catabolism of short chain fatty acids (SCFA) via the tricarboxylic acid (TCA)(acetyl degradation route) and probably the 2-methylcitrate cycle I (propionate degradation route). Catalyzes the reversible isomerization of citrate to isocitrate via cis-aconitate. The apo form of AcnA functions as a RNA-binding regulatory protein. Could catalyze the hydration of 2-methyl-cis-aconitate to yield (2R,3S)-2-methylisocitrate. This chain is Aconitate hydratase A (acn), found in Legionella pneumophila subsp. pneumophila (strain Philadelphia 1 / ATCC 33152 / DSM 7513).